Reading from the N-terminus, the 387-residue chain is Leucine aminopeptidase 1 (387 aa).

The first 18 residues, 1 to 18, serve as a signal peptide directing secretion; that stretch reads MKIRAALALSATASGVLA. The propeptide occupies 19-87; that stretch reads AVVPQQALLN…YPTLHQASNV (69 aa). Asn179 carries an N-linked (GlcNAc...) asparagine glycan. Residues His187, Asp206, Glu245, and Asp272 each contribute to the Zn(2+) site. Cys321 and Cys325 are joined by a disulfide. Residue His354 participates in Zn(2+) binding.

This sequence belongs to the peptidase M28 family. M28E subfamily. Monomer. Zn(2+) serves as cofactor.

The protein localises to the secreted. Its function is as follows. Extracellular aminopeptidase that allows assimilation of proteinaceous substrates. The polypeptide is Leucine aminopeptidase 1 (lap1) (Aspergillus oryzae (strain ATCC 42149 / RIB 40) (Yellow koji mold)).